A 101-amino-acid chain; its full sequence is Ribonuclease kappa-B (101 aa).

2 consecutive transmembrane segments (helical) span residues 13–33 and 68–88; these read ACGI…GVFF and VSYN…FSFC.

The protein belongs to the RNase K family.

It localises to the membrane. In terms of biological role, endoribonuclease which preferentially cleaves ApU and ApG phosphodiester bonds. This Xenopus laevis (African clawed frog) protein is Ribonuclease kappa-B (rnasek-b).